The chain runs to 379 residues: Lactosylceramide 1,3-N-acetyl-beta-D-glucosaminyltransferase A (379 aa).

Over methionine 1–histidine 12 the chain is Cytoplasmic. The helical; Signal-anchor for type II membrane protein transmembrane segment at phenylalanine 13–tryptophan 30 threads the bilayer. Residues glutamate 31 to threonine 379 are Lumenal-facing. N-linked (GlcNAc...) asparagine glycosylation is found at asparagine 57, asparagine 113, asparagine 168, and asparagine 277.

This sequence belongs to the glycosyltransferase 31 family.

It localises to the golgi apparatus membrane. It catalyses the reaction a beta-D-Gal-(1-&gt;4)-beta-D-Glc-(1&lt;-&gt;1)-Cer(d18:1(4E)) + UDP-N-acetyl-alpha-D-glucosamine = a beta-D-GlcNAc-(1-&gt;3)-beta-D-Gal-(1-&gt;4)-beta-D-Glc-(1&lt;-&gt;1)-Cer(d18:1(4E)) + UDP + H(+). The catalysed reaction is a neolactoside nLc4Cer(d18:1(4E)) + UDP-N-acetyl-alpha-D-glucosamine = a neolactoside IV(3)-beta-GlcNAc-nLc4Cer(d18:1(4E)) + UDP + H(+). The protein operates within protein modification; protein glycosylation. Its function is as follows. Beta-1,3-N-acetylglucosaminyltransferase that plays a key role in the synthesis of lacto- or neolacto-series carbohydrate chains on glycolipids. In Danio rerio (Zebrafish), this protein is Lactosylceramide 1,3-N-acetyl-beta-D-glucosaminyltransferase A (b3gnt5a).